The primary structure comprises 336 residues: uncharacterized protein (336 aa).

Residue 29 to 36 (GPKSSGKS) participates in ATP binding.

Belongs to the archaeal ATPase family.

This is an uncharacterized protein from Methanocaldococcus jannaschii (strain ATCC 43067 / DSM 2661 / JAL-1 / JCM 10045 / NBRC 100440) (Methanococcus jannaschii).